We begin with the raw amino-acid sequence, 130 residues long: Small ribosomal subunit protein bS6 (130 aa).

Positions 100 to 130 (SPMVKAKDERRERHDFASEANDDSEAGDSEE) are disordered. Residues 104–116 (KAKDERRERHDFA) show a composition bias toward basic and acidic residues. The segment covering 119 to 130 (ANDDSEAGDSEE) has biased composition (acidic residues).

Belongs to the bacterial ribosomal protein bS6 family.

Its function is as follows. Binds together with bS18 to 16S ribosomal RNA. This chain is Small ribosomal subunit protein bS6, found in Yersinia pestis (strain Pestoides F).